We begin with the raw amino-acid sequence, 427 residues long: Tegument protein VP16 homolog (427 aa).

This sequence belongs to the herpesviridae tegument protein VP16 protein family.

The protein localises to the virion tegument. It localises to the host nucleus. In terms of biological role, transcriptional activator of immediate-early (IE) gene products (alpha genes). Acts as a key activator of lytic infection by initiating the lytic program through the assembly of the transcriptional regulatory VP16-induced complex composed of VP16 and two cellular factors, HCFC1 and POU2F1. VP16-induced complex represents a regulatory switch: when it is on, it promotes IE-gene expression and thus lytic infection, and when it is off, it limits IE-gene transcription favoring latent infection. May play a role in the aggregation of tegument proteins around nucleocapsids during virus morphogenesis. In Gallus gallus (Chicken), this protein is Tegument protein VP16 homolog (MDV061).